The following is a 281-amino-acid chain: Digeranylgeranylglyceryl phosphate synthase (281 aa).

Helical transmembrane passes span 7–27, 32–52, 72–91, 95–117, 128–148, 193–213, 214–234, and 258–278; these read ILRPVNAVMAVITVMLMALIT, FSVLLASVVVFTATGAGNVIN, GRISRGVAGVYSIILFALAS, FYLGLLPGLVVVSSSLLMVYYAW, ITISFLTGLSFVFGGIVLGEV, ISGVLAASFMLIASLTSPSLY, LLGIFSALYIPVLLLAVAVFL, and VGMALTFIAFAAGSGTITALT.

It belongs to the UbiA prenyltransferase family. DGGGP synthase subfamily. Mg(2+) serves as cofactor.

It is found in the cell membrane. The enzyme catalyses sn-3-O-(geranylgeranyl)glycerol 1-phosphate + (2E,6E,10E)-geranylgeranyl diphosphate = 2,3-bis-O-(geranylgeranyl)-sn-glycerol 1-phosphate + diphosphate. It participates in membrane lipid metabolism; glycerophospholipid metabolism. Functionally, prenyltransferase that catalyzes the transfer of the geranylgeranyl moiety of geranylgeranyl diphosphate (GGPP) to the C2 hydroxyl of (S)-3-O-geranylgeranylglyceryl phosphate (GGGP). This reaction is the second ether-bond-formation step in the biosynthesis of archaeal membrane lipids. The protein is Digeranylgeranylglyceryl phosphate synthase of Methanothermobacter thermautotrophicus (strain ATCC 29096 / DSM 1053 / JCM 10044 / NBRC 100330 / Delta H) (Methanobacterium thermoautotrophicum).